Here is a 198-residue protein sequence, read N- to C-terminus: Heat shock 70 kDa protein (198 aa).

Gly residues predominate over residues 170-191; that stretch reads GGGVPSGMPGGMPGAGGGGGKG. A disordered region spans residues 170-198; that stretch reads GGGVPSGMPGGMPGAGGGGGKGPTIEEVD.

This sequence belongs to the heat shock protein 70 family.

The protein is Heat shock 70 kDa protein of Schistosoma japonicum (Blood fluke).